The sequence spans 6668 residues: Centrosome-associated protein CEP250 (6668 aa).

20 coiled-coil regions span residues 562–589, 632–666, 873–988, 1042–1087, 1252–1307, 1333–1427, 1501–1538, 1594–1688, 1896–1930, 1975–2224, 2298–3272, 3298–3436, 3526–3599, 3697–3773, 3856–4137, 4170–4486, 4515–5078, 5165–5202, 5298–5731, and 5927–6119; these read KAFH…LQQD, TREL…LRAS, HTEC…LRSS, LRMS…HEAA, VEDL…AVSR, LESL…LEKK, RPAA…LGTQ, REAL…SEVA, HDIL…TTEK, EETL…AKQS, AEDE…LKME, QQEL…SRAE, LVQL…AKEE, CASL…EERR, TEML…VEAE, RRKL…LRER, LETL…FRRR, LASL…QETL, LREK…QHRV, and TQAL…LWRQ.

Post-translationally, proteolytically cleaved; only the full-length form localizes to the inner core, while processed version also localizes to the outer core during the onset of cell division.

It is found in the cytoplasm. The protein localises to the cytoskeleton. It localises to the microtubule organizing center. The protein resides in the centrosome. Its function is as follows. Part of the centrosome inner core complex. Required for the linking of centrosomal inner and outer cores. In Toxoplasma gondii (strain ATCC 50611 / Me49), this protein is Centrosome-associated protein CEP250.